The following is a 157-amino-acid chain: Phosphopantetheine adenylyltransferase (157 aa).

It belongs to the eukaryotic CoaD family. In terms of assembly, monomer.

Its subcellular location is the cytoplasm. The catalysed reaction is (R)-4'-phosphopantetheine + ATP + H(+) = 3'-dephospho-CoA + diphosphate. Its pathway is cofactor biosynthesis; coenzyme A biosynthesis. Its function is as follows. Reversibly transfers an adenylyl group from ATP to 4'-phosphopantetheine, yielding dephospho-CoA (dPCoA) and pyrophosphate. This chain is Phosphopantetheine adenylyltransferase, found in Pyrococcus abyssi (strain GE5 / Orsay).